A 230-amino-acid chain; its full sequence is MQINLNDVKIEPSWKEVLKDEFLSENFARIKENFLKAKSAGVVYPPSGLIFNAFNLTPFHDVKVVILGQDPYHGANQAMGLSFSVPSGVRVPPSLVNIYKEIYADLGIKEPNSGDLTKWAKQGVLLLNSTLSVSAGAANSHASFGWQGFTDAVIRKISENLQNVVFMLWGNPAKAKAPLIDASKHLILEAAHPSPLARGAFFGCRHFSKANIYLAKHGKTPIEWDLNTKI.

D70 functions as the Proton acceptor in the catalytic mechanism.

The protein belongs to the uracil-DNA glycosylase (UDG) superfamily. UNG family.

It localises to the cytoplasm. It carries out the reaction Hydrolyzes single-stranded DNA or mismatched double-stranded DNA and polynucleotides, releasing free uracil.. Its function is as follows. Excises uracil residues from the DNA which can arise as a result of misincorporation of dUMP residues by DNA polymerase or due to deamination of cytosine. The polypeptide is Uracil-DNA glycosylase (Campylobacter concisus (strain 13826)).